Reading from the N-terminus, the 478-residue chain is Proline--tRNA ligase (478 aa).

It belongs to the class-II aminoacyl-tRNA synthetase family. ProS type 3 subfamily. Homodimer.

It is found in the cytoplasm. It carries out the reaction tRNA(Pro) + L-proline + ATP = L-prolyl-tRNA(Pro) + AMP + diphosphate. In terms of biological role, catalyzes the attachment of proline to tRNA(Pro) in a two-step reaction: proline is first activated by ATP to form Pro-AMP and then transferred to the acceptor end of tRNA(Pro). The protein is Proline--tRNA ligase of Ignicoccus hospitalis (strain KIN4/I / DSM 18386 / JCM 14125).